Consider the following 418-residue polypeptide: L-rhamnose isomerase (418 aa).

3 residues coordinate Mn(2+): H262, D294, and D296.

Belongs to the rhamnose isomerase family. Homotetramer. The cofactor is Mn(2+).

The protein localises to the cytoplasm. It catalyses the reaction L-rhamnopyranose = L-rhamnulose. Its pathway is carbohydrate degradation; L-rhamnose degradation; glycerone phosphate from L-rhamnose: step 1/3. Functionally, catalyzes the interconversion of L-rhamnose and L-rhamnulose. The chain is L-rhamnose isomerase from Yersinia pestis bv. Antiqua (strain Antiqua).